The primary structure comprises 379 residues: Cytochrome b (379 aa).

The next 4 helical transmembrane spans lie at 33-53 (FGSL…FLAM), 77-98 (WLIR…FIHV), 113-133 (WNIG…GYVL), and 178-198 (FFAF…VHLL). Heme b-binding residues include H83 and H97. H182 and H196 together coordinate heme b. Residue H201 participates in a ubiquinone binding. Helical transmembrane passes span 226–246 (TKDL…TLFF), 288–308 (LGGV…PLLN), 320–340 (ITQT…WIGG), and 347–367 (FTTI…ILIP).

Belongs to the cytochrome b family. The cytochrome bc1 complex contains 11 subunits: 3 respiratory subunits (MT-CYB, CYC1 and UQCRFS1), 2 core proteins (UQCRC1 and UQCRC2) and 6 low-molecular weight proteins (UQCRH/QCR6, UQCRB/QCR7, UQCRQ/QCR8, UQCR10/QCR9, UQCR11/QCR10 and a cleavage product of UQCRFS1). This cytochrome bc1 complex then forms a dimer. It depends on heme b as a cofactor.

The protein localises to the mitochondrion inner membrane. Component of the ubiquinol-cytochrome c reductase complex (complex III or cytochrome b-c1 complex) that is part of the mitochondrial respiratory chain. The b-c1 complex mediates electron transfer from ubiquinol to cytochrome c. Contributes to the generation of a proton gradient across the mitochondrial membrane that is then used for ATP synthesis. In Akodon azarae (Azara's grass mouse), this protein is Cytochrome b (MT-CYB).